The chain runs to 812 residues: Eukaryotic translation initiation factor 3 subunit C (812 aa).

The disordered stretch occupies residues 1–105 (MSRFFSRGYH…SDESDDEGKK (105 aa)). Composition is skewed to acidic residues over residues 17–40 (SEDEELLTSSEEELMSSSEEEVVS) and 48–59 (SESESAESDDDS). One can recognise a PCI domain in the interval 607–783 (FHQHINLDLI…EMLIFDKGDE (177 aa)).

This sequence belongs to the eIF-3 subunit C family. In terms of assembly, component of the eukaryotic translation initiation factor 3 (eIF-3) complex.

The protein localises to the cytoplasm. Its function is as follows. Component of the eukaryotic translation initiation factor 3 (eIF-3) complex, which is involved in protein synthesis of a specialized repertoire of mRNAs and, together with other initiation factors, stimulates binding of mRNA and methionyl-tRNAi to the 40S ribosome. The eIF-3 complex specifically targets and initiates translation of a subset of mRNAs involved in cell proliferation. This is Eukaryotic translation initiation factor 3 subunit C from Eremothecium gossypii (strain ATCC 10895 / CBS 109.51 / FGSC 9923 / NRRL Y-1056) (Yeast).